We begin with the raw amino-acid sequence, 132 residues long: Small ribosomal subunit protein uS8 (132 aa).

Belongs to the universal ribosomal protein uS8 family. In terms of assembly, part of the 30S ribosomal subunit. Contacts proteins S5 and S12.

One of the primary rRNA binding proteins, it binds directly to 16S rRNA central domain where it helps coordinate assembly of the platform of the 30S subunit. This Sinorhizobium fredii (strain NBRC 101917 / NGR234) protein is Small ribosomal subunit protein uS8.